The following is a 297-amino-acid chain: rRNA 2'-O-methyltransferase fibrillarin (297 aa).

The disordered stretch occupies residues 1–56 (MRGGFGRGGGGRGGSRGGRGGFGRGGGRGGGRGGGRGGGRGGGRGGGRGGGRGGAG). Asymmetric dimethylarginine is present on residues R2, R7, R12, R16, R19, R24, R28, R32, R36, R40, R44, R48, and R52. S-adenosyl-L-methionine contacts are provided by residues 149–150 (TT), 168–169 (EF), 192–193 (DA), and 212–215 (DVAQ).

This sequence belongs to the methyltransferase superfamily. Fibrillarin family. In terms of assembly, component of box C/D small nucleolar ribonucleoprotein (snoRNP) particles. It is associated with the U3, U8 and U13 small nuclear RNAs. In terms of processing, by homology to other fibrillarins, some or all of the N-terminal domain arginines are modified to asymmetric dimethylarginine (DMA).

It localises to the nucleus. The protein localises to the nucleolus. The catalysed reaction is L-glutaminyl-[histone H2A] + S-adenosyl-L-methionine = N(5)-methyl-L-glutaminyl-[histone H2A] + S-adenosyl-L-homocysteine + H(+). S-adenosyl-L-methionine-dependent methyltransferase that has the ability to methylate both RNAs and proteins. Involved in pre-rRNA processing. Utilizes the methyl donor S-adenosyl-L-methionine to catalyze the site-specific 2'-hydroxyl methylation of ribose moieties in pre-ribosomal RNA. Site specificity is provided by a guide RNA that base pairs with the substrate. Methylation occurs at a characteristic distance from the sequence involved in base pairing with the guide RNA. Also acts as a protein methyltransferase by mediating methylation of 'Gln-105' of histone H2A (H2AQ105me), a modification that impairs binding of the FACT complex and is specifically present at 35S ribosomal DNA locus. The polypeptide is rRNA 2'-O-methyltransferase fibrillarin (Leishmania major).